The sequence spans 463 residues: Homoserine O-acetyltransferase FUB5 (463 aa).

The AB hydrolase-1 domain occupies 113-436 (NVMIICHALS…VSDDGHDAFL (324 aa)). Residue Ser-211 is the Nucleophile of the active site. Positions 296-312 (RFGRDTGSKKKTQKQES) are enriched in basic and acidic residues. The tract at residues 296-331 (RFGRDTGSKKKTQKQESKTLPSNSTPIHSHSGADET) is disordered. Residues Asp-403 and His-432 contribute to the active site.

Belongs to the AB hydrolase superfamily. MetX family.

It carries out the reaction L-homoserine + acetyl-CoA = O-acetyl-L-homoserine + CoA. It functions in the pathway mycotoxin biosynthesis. Functionally, homoserine O-acetyltransferase; part of the gene cluster that mediates the biosynthesis of fusaric acid, a mycotoxin with low to moderate toxicity to animals and humans, but with high phytotoxic properties. L-aspartate is suggested as fusaric acid amino acid precursor that is activated and further processed to O-acetyl-L-homoserine by cluster enzymes aspartate kinase FUB3 and homoserine O-acetyltransferase FUB5, as well as enzymes of the primary metabolism. The polyketide synthase (PKS) FUB1 generates the triketide trans-2-hexenal which is presumptively released by the hydrolase FUB4 and linked to the NRPS-bound amino acid precursor by NAD(P)-dependent dehydrogenase FUB6. FUB1, FUB4, and the non-canonical NRPS Fub8 may form an enzyme complex. Further processing of the NRPS-bound intermediate might be carried out by FUB6 and the sulfhydrylase FUB7, enabling a spontaneous electrocyclization to close the carbon backbone of fusaric acid. Dihydrofusaric acid is likely to be released via reduction by the thioester reductase (TR) domain of FUB8 whereupon the final oxidation to fusaric acid may (also) be performed by the FMN-dependent dehydrogenase FUB9. The polypeptide is Homoserine O-acetyltransferase FUB5 (Gibberella moniliformis (strain M3125 / FGSC 7600) (Maize ear and stalk rot fungus)).